The following is a 208-amino-acid chain: LexA repressor (208 aa).

A DNA-binding region (H-T-H motif) is located at residues 29–49 (VREICSAVGLSSTSTVHGHIS). Catalysis depends on for autocatalytic cleavage activity residues Ser-129 and Lys-167.

The protein belongs to the peptidase S24 family. Homodimer.

It carries out the reaction Hydrolysis of Ala-|-Gly bond in repressor LexA.. Represses a number of genes involved in the response to DNA damage (SOS response), including recA and lexA. In the presence of single-stranded DNA, RecA interacts with LexA causing an autocatalytic cleavage which disrupts the DNA-binding part of LexA, leading to derepression of the SOS regulon and eventually DNA repair. The polypeptide is LexA repressor (Limosilactobacillus reuteri (strain DSM 20016) (Lactobacillus reuteri)).